The sequence spans 428 residues: Adenylosuccinate synthetase (428 aa).

GTP is bound by residues 12–18 (GDEGKGK) and 40–42 (GHT). Asp13 functions as the Proton acceptor in the catalytic mechanism. Mg(2+) is bound by residues Asp13 and Gly40. IMP is bound by residues 13–16 (DEGK), 38–41 (NAGH), Thr130, Arg144, Gln225, Thr240, and Arg304. His41 (proton donor) is an active-site residue. 300–306 (VTTGRAR) serves as a coordination point for substrate. GTP-binding positions include Arg306, 332–334 (KID), and 414–416 (SVG).

This sequence belongs to the adenylosuccinate synthetase family. In terms of assembly, homodimer. The cofactor is Mg(2+).

It is found in the cytoplasm. It carries out the reaction IMP + L-aspartate + GTP = N(6)-(1,2-dicarboxyethyl)-AMP + GDP + phosphate + 2 H(+). The protein operates within purine metabolism; AMP biosynthesis via de novo pathway; AMP from IMP: step 1/2. Its function is as follows. Plays an important role in the de novo pathway of purine nucleotide biosynthesis. Catalyzes the first committed step in the biosynthesis of AMP from IMP. This Clostridium botulinum (strain ATCC 19397 / Type A) protein is Adenylosuccinate synthetase.